The sequence spans 800 residues: Nucleolar complex protein 3 homolog (800 aa).

Composition is skewed to basic residues over residues 1–19 (MGPA…RKLL) and 42–53 (KKQRKEQRKLHK). Disordered stretches follow at residues 1 to 91 (MGPA…TDMM) and 167 to 197 (KPVL…SAPL). Residues 65–74 (PLERYKKRPE) show a composition bias toward basic and acidic residues. The stretch at 449 to 490 (SFKEKRKNLSRMQRKWKKAEEKLQKELLEAEATESKEKKIKL) forms a coiled coil. Residues 780–800 (LQEEPEQMSLDFTSPHTQQEP) form a disordered region. Polar residues predominate over residues 789 to 800 (LDFTSPHTQQEP).

It belongs to the CBF/MAK21 family.

It is found in the nucleus. Its subcellular location is the nucleolus. The chain is Nucleolar complex protein 3 homolog (noc3l) from Danio rerio (Zebrafish).